We begin with the raw amino-acid sequence, 392 residues long: Tyrosine--tRNA ligase (392 aa).

The 'HIGH' region signature appears at 41–50 (PTAPDLHLGH). The 'KMSKS' region signature appears at 225-229 (KMSKS). Residue Lys228 participates in ATP binding. Residues 330–390 (LRAVDFLVKI…VGKKKFYRVV (61 aa)) enclose the S4 RNA-binding domain.

It belongs to the class-I aminoacyl-tRNA synthetase family. TyrS type 2 subfamily. Homodimer.

Its subcellular location is the cytoplasm. It carries out the reaction tRNA(Tyr) + L-tyrosine + ATP = L-tyrosyl-tRNA(Tyr) + AMP + diphosphate + H(+). Catalyzes the attachment of tyrosine to tRNA(Tyr) in a two-step reaction: tyrosine is first activated by ATP to form Tyr-AMP and then transferred to the acceptor end of tRNA(Tyr). The chain is Tyrosine--tRNA ligase from Aquifex aeolicus (strain VF5).